Reading from the N-terminus, the 102-residue chain is Small ribosomal subunit protein uS10 (102 aa).

The protein belongs to the universal ribosomal protein uS10 family. Part of the 30S ribosomal subunit.

Its function is as follows. Involved in the binding of tRNA to the ribosomes. The protein is Small ribosomal subunit protein uS10 of Methanococcus maripaludis (strain C5 / ATCC BAA-1333).